The following is a 319-amino-acid chain: Annexin A4 (319 aa).

N-acetylalanine is present on A2. Position 7 is a phosphothreonine (T7). Residue S12 is modified to Phosphoserine. 4 Annexin repeats span residues 14–85, 86–157, 169–241, and 245–316; these read FSAT…GMIT, PTVL…SLSA, ALMR…AIVK, and NKSA…ILCG. 3 positions are modified to N6-acetyllysine: K213, K293, and K300.

Belongs to the annexin family. As to expression, expressed in pancreas (at protein level). Also detected in liver, spleen, intestine, stomach, kidney, and adrenal glands.

It is found in the zymogen granule membrane. Functionally, calcium/phospholipid-binding protein which promotes membrane fusion and is involved in exocytosis. The sequence is that of Annexin A4 (ANXA4) from Canis lupus familiaris (Dog).